A 389-amino-acid chain; its full sequence is Chalcone synthase 3 (389 aa).

Cysteine 164 is an active-site residue.

Belongs to the thiolase-like superfamily. Chalcone/stilbene synthases family.

The enzyme catalyses (E)-4-coumaroyl-CoA + 3 malonyl-CoA + 3 H(+) = 2',4,4',6'-tetrahydroxychalcone + 3 CO2 + 4 CoA. It functions in the pathway secondary metabolite biosynthesis; flavonoid biosynthesis. Its function is as follows. The primary product of this enzyme is 4,2',4',6'-tetrahydroxychalcone (also termed naringenin-chalcone or chalcone) which can under specific conditions spontaneously isomerize into naringenin. The protein is Chalcone synthase 3 (CHS3) of Pisum sativum (Garden pea).